The chain runs to 256 residues: Stanniocalcin (256 aa).

Residues 1–18 (MLAKFGLCAVFLVLGTAA) form the signal peptide. Residues 19-33 (TFDTDPEEASPRRAR) constitute a propeptide that is removed on maturation. Residue asparagine 62 is glycosylated (N-linked (GlcNAc...) asparagine). The tract at residues 204-241 (QGSNQGPNSAPAGWRWPMGSPPSFKIQPSMRGRDPTHL) is disordered.

Belongs to the stanniocalcin family. In terms of assembly, homodimer; disulfide-linked. In terms of tissue distribution, produced and secreted by the corpuscles of Stannius.

The protein resides in the secreted. Its primary function is the prevention of hypercalcemia. Upon release into the circulation, it lowers calcium transport by the gills, thereby reducing its rate of influx from the environment into the extracellular compartment. STC also stimulates phosphate reabsorption by renal proximal tubules. The consequence of this action is increased levels of plasma phosphate, which combines with excess calcium and promotes its disposal into bone and scales. The sequence is that of Stanniocalcin (stc) from Oncorhynchus mykiss (Rainbow trout).